A 77-amino-acid chain; its full sequence is U11-lycotoxin-Ls1b (77 aa).

Residues 1–20 form the signal peptide; sequence MKLIIFTGLALFAIVSLIEA. The propeptide occupies 21–26; that stretch reads EEESGR.

It belongs to the neurotoxin 19 (CSTX) family. 10 (U11-Lctx) subfamily. Post-translationally, contains 4 disulfide bonds. In terms of tissue distribution, expressed by the venom gland.

The protein resides in the secreted. The polypeptide is U11-lycotoxin-Ls1b (Lycosa singoriensis (Wolf spider)).